Here is a 290-residue protein sequence, read N- to C-terminus: Undecaprenyl-diphosphatase (290 aa).

Helical transmembrane passes span Pro-39–Phe-59, Ala-85–Leu-105, Leu-118–Ala-138, Ser-202–Gly-222, Pro-230–Met-250, and Phe-261–Leu-281.

Belongs to the UppP family.

The protein localises to the cell membrane. It catalyses the reaction di-trans,octa-cis-undecaprenyl diphosphate + H2O = di-trans,octa-cis-undecaprenyl phosphate + phosphate + H(+). Catalyzes the dephosphorylation of undecaprenyl diphosphate (UPP). Confers resistance to bacitracin. This chain is Undecaprenyl-diphosphatase, found in Streptomyces griseus subsp. griseus (strain JCM 4626 / CBS 651.72 / NBRC 13350 / KCC S-0626 / ISP 5235).